A 599-amino-acid chain; its full sequence is Serine/threonine-protein kinase Nek1 (599 aa).

Residues 4 to 258 (YEVLEQIGKG…AAELLKHPHL (255 aa)) form the Protein kinase domain. Residues 10–18 (IGKGAFGSA) and lysine 33 contribute to the ATP site. The active-site Proton acceptor is the aspartate 129. 3 disordered regions span residues 364–386 (SIVKTPKRTPSKTITTPQLEPPK), 461–482 (SEDPPFLKLHGRRSPTPTPQHC), and 504–542 (DDDDGRSDSSSGRNNAAAAASSRAGSSESTRQRRFDTSS). The span at 511–530 (DSSSGRNNAAAAASSRAGSS) shows a compositional bias: low complexity.

Belongs to the protein kinase superfamily. NEK Ser/Thr protein kinase family. NIMA subfamily. In terms of tissue distribution, expressed in anthers, pistils and leaves.

It carries out the reaction L-seryl-[protein] + ATP = O-phospho-L-seryl-[protein] + ADP + H(+). The catalysed reaction is L-threonyl-[protein] + ATP = O-phospho-L-threonyl-[protein] + ADP + H(+). In terms of biological role, may be involved in plant development processes. This chain is Serine/threonine-protein kinase Nek1, found in Oryza sativa subsp. japonica (Rice).